The chain runs to 212 residues: ATP phosphoribosyltransferase (212 aa).

The protein belongs to the ATP phosphoribosyltransferase family. Short subfamily. In terms of assembly, heteromultimer composed of HisG and HisZ subunits.

The protein localises to the cytoplasm. The catalysed reaction is 1-(5-phospho-beta-D-ribosyl)-ATP + diphosphate = 5-phospho-alpha-D-ribose 1-diphosphate + ATP. Its pathway is amino-acid biosynthesis; L-histidine biosynthesis; L-histidine from 5-phospho-alpha-D-ribose 1-diphosphate: step 1/9. In terms of biological role, catalyzes the condensation of ATP and 5-phosphoribose 1-diphosphate to form N'-(5'-phosphoribosyl)-ATP (PR-ATP). Has a crucial role in the pathway because the rate of histidine biosynthesis seems to be controlled primarily by regulation of HisG enzymatic activity. This is ATP phosphoribosyltransferase from Prochlorococcus marinus (strain AS9601).